Consider the following 477-residue polypeptide: Putative multidrug resistance protein MdtD (477 aa).

The next 14 helical transmembrane spans lie at L13 to A33, S50 to A70, V73 to C93, V107 to I127, F139 to V159, W166 to M186, F196 to D216, G220 to A240, L268 to F288, V291 to S311, G326 to V348, G352 to A374, L394 to I414, and A432 to A452.

Belongs to the major facilitator superfamily. TCR/Tet family.

Its subcellular location is the cell inner membrane. This chain is Putative multidrug resistance protein MdtD, found in Serratia proteamaculans (strain 568).